The chain runs to 119 residues: Protein TusC (119 aa).

The protein belongs to the DsrF/TusC family. In terms of assembly, heterohexamer, formed by a dimer of trimers. The hexameric TusBCD complex contains 2 copies each of TusB, TusC and TusD. The TusBCD complex interacts with TusE.

The protein resides in the cytoplasm. Its function is as follows. Part of a sulfur-relay system required for 2-thiolation of 5-methylaminomethyl-2-thiouridine (mnm(5)s(2)U) at tRNA wobble positions. The polypeptide is Protein TusC (Escherichia coli O8 (strain IAI1)).